A 160-amino-acid chain; its full sequence is E3 ubiquitin ligase complex SCF subunit sconC (160 aa).

Positions 101-160 (ILAANYLDIKALLDVGCKTVANMIKGKSPEEIRKTFNIQNDFTPEEEDQIRRENEWAEDR) are interaction with the F-box domain of F-box proteins.

Belongs to the SKP1 family. As to quaternary structure, component of the SCF (SKP1-CUL1-F-box protein) E3 ubiquitin ligase complexes.

It participates in protein modification; protein ubiquitination. Essential component of the SCF (SKP1-CUL1-F-box protein) E3 ubiquitin ligase complexes, which mediate the ubiquitination and subsequent proteasomal degradation of target proteins. Controls sulfur metabolite repression, probably by mediating the inactivation or degradation of the metR transcription factor. This is E3 ubiquitin ligase complex SCF subunit sconC (sconC) from Talaromyces marneffei (strain ATCC 18224 / CBS 334.59 / QM 7333) (Penicillium marneffei).